A 105-amino-acid polypeptide reads, in one-letter code: Small ribosomal subunit protein uS10 (105 aa).

It belongs to the universal ribosomal protein uS10 family. In terms of assembly, part of the 30S ribosomal subunit.

Functionally, involved in the binding of tRNA to the ribosomes. The sequence is that of Small ribosomal subunit protein uS10 from Chlamydia pneumoniae (Chlamydophila pneumoniae).